The following is a 527-amino-acid chain: Transcriptional regulator ATRX (527 aa).

Residues glycine 1–arginine 527 are disordered. Polar residues predominate over residues arginine 14–glycine 23. Residues proline 27 to lysine 46 show a composition bias toward basic and acidic residues. Residues glutamate 47 to lysine 59 show a composition bias toward basic residues. Basic and acidic residues predominate over residues valine 60–glutamine 84. Phosphoserine occurs at positions 62 and 74. Residues glycine 85–lysine 94 show a composition bias toward basic residues. Basic and acidic residues-rich tracts occupy residues lysine 95–glutamate 122, asparagine 136–lysine 145, aspartate 152–glutamine 194, and lysine 204–lysine 250. Residue lysine 105 forms a Glycyl lysine isopeptide (Lys-Gly) (interchain with G-Cter in SUMO2) linkage. Serine 112, serine 113, and serine 114 each carry phosphoserine. Position 162 is a phosphoserine (serine 162). A Citrulline modification is found at arginine 184. The span at lysine 267–arginine 297 shows a compositional bias: basic residues. The segment at leucine 290–serine 427 is interaction with DAXX. Serine 345, serine 346, and serine 354 each carry phosphoserine. Residues proline 368–lysine 382 show a composition bias toward basic and acidic residues. The span at serine 387–lysine 398 shows a compositional bias: acidic residues. Residues glutamate 399–glutamate 410 show a composition bias toward basic and acidic residues. Serine 423, serine 425, and serine 427 each carry phosphoserine. The segment covering proline 435 to leucine 446 has biased composition (basic residues). Serine 449 and serine 453 each carry phosphoserine. Basic and acidic residues-rich tracts occupy residues glycine 454–glycine 469 and lysine 509–arginine 518.

This sequence belongs to the SNF2/RAD54 helicase family. As to quaternary structure, interacts with DAXX to form the chromatin remodeling complex ATRX:DAXX. Probably binds EZH2. Binds annexin V in a calcium and phosphatidylcholine/phosphatidylserine-dependent manner. Interacts directly with CBX5 via the PxVxL motif. Interacts with RAD50, MRE11 and NBN; indicative for an association with the MRN complex. Interacts with histone MACROH2A1. Interacts with histone H3 peptides methylated at 'Lys-10' with preferences H3K9me3 &gt; H3K9me2 &gt; H3K9me1. Interacts with histone H3 peptides unmethylated at 'Lys-5' (H3K4me0). Interacts with MECP2, SMC1 and SMC3. Interacts with SETDB1, TRIM28 and ZNF274. In terms of processing, citrullinated by PADI4.

It localises to the nucleus. It is found in the chromosome. Its subcellular location is the telomere. The protein resides in the PML body. It catalyses the reaction ATP + H2O = ADP + phosphate + H(+). Functionally, involved in transcriptional regulation and chromatin remodeling. Facilitates DNA replication in multiple cellular environments and is required for efficient replication of a subset of genomic loci. Binds to DNA tandem repeat sequences in both telomeres and euchromatin and in vitro binds DNA quadruplex structures. May help stabilizing G-rich regions into regular chromatin structures by remodeling G4 DNA and incorporating H3.3-containing nucleosomes. Catalytic component of the chromatin remodeling complex ATRX:DAXX which has ATP-dependent DNA translocase activity and catalyzes the replication-independent deposition of histone H3.3 in pericentric DNA repeats outside S-phase and telomeres, and the in vitro remodeling of H3.3-containing nucleosomes. Its heterochromatin targeting is proposed to involve a combinatorial readout of histone H3 modifications (specifically methylation states of H3K9 and H3K4) and association with CBX5. Involved in maintaining telomere structural integrity in embryonic stem cells probably implying recruitment of CBX5 to telomeres. May be involved in transcriptional regulation of telomeric repeat-containing RNA (TERRA). Acts as a negative regulator of chromatin incorporation of transcriptionally repressive histone MACROH2A1, particularily at telomeres. Participates in the allele-specific gene expression at the imprinted IGF2/H19 gene locus. On the maternal allele, required for the chromatin occupancy of SMC1 and CTCTF within the H19 imprinting control region (ICR) and involved in esatblishment of histone tails modifications in the ICR. Binds to zinc-finger coding genes with atypical chromatin signatures and regulates its H3K9me3 levels. Forms a complex with ZNF274, TRIM28 and SETDB1 to facilitate the deposition and maintenance of H3K9me3 at the 3' exons of zinc-finger genes. The protein is Transcriptional regulator ATRX (Atrx) of Rattus norvegicus (Rat).